The sequence spans 119 residues: Large ribosomal subunit protein bL20c (119 aa).

Belongs to the bacterial ribosomal protein bL20 family.

The protein localises to the plastid. It is found in the chloroplast. Functionally, binds directly to 23S ribosomal RNA and is necessary for the in vitro assembly process of the 50S ribosomal subunit. It is not involved in the protein synthesizing functions of that subunit. The sequence is that of Large ribosomal subunit protein bL20c from Triticum aestivum (Wheat).